A 312-amino-acid polypeptide reads, in one-letter code: Flavonol 3-sulfotransferase (312 aa).

59–64 (KSGTTW) is a 3'-phosphoadenylyl sulfate binding site. H119 acts as the Proton acceptor in catalysis. 3'-phosphoadenylyl sulfate-binding positions include R141, S149, Y207, and 277–279 (RKG).

It belongs to the sulfotransferase 1 family. In terms of tissue distribution, highest in shoot tips and lowest in mature leaves and roots.

The protein localises to the cytoplasm. Sulfotransferase that utilizes 3'-phospho-5'-adenylyl sulfate (PAPS) as sulfonate donor to catalyze the sulfate conjugation of quercetin, rhamnetin and isorhamnetin but not kaempferol. O-sulfation of position 3 of flavonol. May play a role in auxin transport. This chain is Flavonol 3-sulfotransferase, found in Flaveria bidentis (Coastal plain yellowtops).